A 189-amino-acid polypeptide reads, in one-letter code: GTPase NRas (189 aa).

Residues 10-18 and 29-30 contribute to the GTP site; these read GAGGVGKSA and VD. An Effector region motif is present at residues 32–40; that stretch reads YDPTIEDSY. A (Microbial infection) O-linked (Glc) threonine; by P.sordellii toxin TcsL glycan is attached at T35. 57–61 is a GTP binding site; that stretch reads DTAGQ. Position 89 is a phosphoserine (S89). 116–119 provides a ligand contact to GTP; that stretch reads NKCD. The tract at residues 166 to 185 is hypervariable region; that stretch reads YRMKKLNSSDDGTQGCMGLP. A Glycyl lysine isopeptide (Lys-Gly) (interchain with G-Cter in ubiquitin) cross-link involves residue K170. Residue C181 is the site of S-palmitoyl cysteine attachment. The S-farnesyl cysteine moiety is linked to residue C186. Positions 187–189 are cleaved as a propeptide — removed in mature form; it reads VVM.

The protein belongs to the small GTPase superfamily. Ras family. In terms of assembly, interacts (active GTP-bound form preferentially) with RGS14. Interacts (active GTP-bound form) with RASSF7. Interacts (active GTP-bound form) with both SHOC2 and PP1c (all isoforms) to form a tertiary complex; SHOC2 and PP1c preferably bind M-Ras/MRAS, but they also bind K-Ras/KRAS, N-Ras/NRAS and H-Ras/HRAS. Post-translationally, palmitoylated by the ZDHHC9-GOLGA7 complex. Depalmitoylated by ABHD17A, ABHD17B and ABHD17C. A continuous cycle of de- and re-palmitoylation regulates rapid exchange between plasma membrane and Golgi. In terms of processing, acetylation at Lys-104 prevents interaction with guanine nucleotide exchange factors (GEFs). Fatty-acylated at Lys-169 and/or Lys-170. Post-translationally, ubiquitinated by the BCR(LZTR1) E3 ubiquitin ligase complex at Lys-170 in a non-degradative manner, leading to inhibit Ras signaling by decreasing Ras association with membranes. In terms of processing, phosphorylation at Ser-89 enhances NRAS association with its downstream effectors. (Microbial infection) Glucosylated at Thr-35 by P.sordellii toxin TcsL.

Its subcellular location is the cell membrane. It is found in the golgi apparatus membrane. It carries out the reaction GTP + H2O = GDP + phosphate + H(+). Alternates between an inactive form bound to GDP and an active form bound to GTP. Activated by a guanine nucleotide-exchange factor (GEF) and inactivated by a GTPase-activating protein (GAP). Its function is as follows. Ras proteins bind GDP/GTP and possess intrinsic GTPase activity. The chain is GTPase NRas (NRAS) from Homo sapiens (Human).